The primary structure comprises 364 residues: MPYQYPALTPEQKKELSDIAHRIVAPGKGILAADESTGSIAKRLQSIGTENTEENRRFYRQLLLTADDRVNPCIGGVILFHETLYQKADDGRPFPQVIKSKGGVVGIKVDKGVVPLAGTNGETTTQGLDGLSERCAQYKKDGADFAKWRCVLKIGEHTPSALAIMENANVLARYASICQQNGIVPIVEPEILPDGDHDLKRCQYVTEKVLAAVYKALSDHHIYLEGTLLKPNMVTPGHACTQKFSHEEIAMATVTALRRTVPPAVTGITFLSGGQSEEEASINLNAINKCPLLKPWALTFSYGRALQASALKAWGGKKENLKAAQEEYVKRALANSLACQGKYTPSGQAGAAASESLFVSNHAY.

The residue at position 5 (tyrosine 5) is a Phosphotyrosine. Threonine 9 bears the Phosphothreonine mark. Serine 36 and serine 39 each carry phosphoserine. Lysine 42 carries the N6-acetyllysine; alternate modification. Lysine 42 is covalently cross-linked (Glycyl lysine isopeptide (Lys-Gly) (interchain with G-Cter in SUMO1); alternate). Residue lysine 42 forms a Glycyl lysine isopeptide (Lys-Gly) (interchain with G-Cter in SUMO2); alternate linkage. Position 43 (arginine 43) interacts with beta-D-fructose 1,6-bisphosphate. Phosphoserine is present on serine 46. Residue lysine 99 is modified to N6-(2-hydroxyisobutyryl)lysine. At lysine 108 the chain carries N6-acetyllysine. Lysine 111 is subject to N6-acetyllysine; alternate. An N6-malonyllysine; alternate modification is found at lysine 111. Position 132 is a phosphoserine (serine 132). Lysine 147 carries the N6-(2-hydroxyisobutyryl)lysine modification. The Proton acceptor role is filled by glutamate 188. The Schiff-base intermediate with dihydroxyacetone-P role is filled by lysine 230. Phosphoserine is present on serine 272. Residues serine 272 to glycine 274, serine 301, and arginine 304 each bind beta-D-fructose 1,6-bisphosphate. An N6-malonyllysine modification is found at lysine 312. Lysine 330 is subject to N6-acetyllysine.

Belongs to the class I fructose-bisphosphate aldolase family. In terms of assembly, homotetramer. Interacts with SNX9 and WAS. Interacts with FBP2; the interaction blocks FBP2 inhibition by physiological concentrations of AMP and reduces inhibition by Ca(2+).

It localises to the cytoplasm. The protein localises to the myofibril. Its subcellular location is the sarcomere. The protein resides in the i band. It is found in the m line. It carries out the reaction beta-D-fructose 1,6-bisphosphate = D-glyceraldehyde 3-phosphate + dihydroxyacetone phosphate. It functions in the pathway carbohydrate degradation; glycolysis; D-glyceraldehyde 3-phosphate and glycerone phosphate from D-glucose: step 4/4. In terms of biological role, catalyzes the reversible conversion of beta-D-fructose 1,6-bisphosphate (FBP) into two triose phosphate and plays a key role in glycolysis and gluconeogenesis. In addition, may also function as scaffolding protein. In Homo sapiens (Human), this protein is Fructose-bisphosphate aldolase A.